Consider the following 93-residue polypeptide: Small ribosomal subunit protein uS19 (93 aa).

A disordered region spans residues 73 to 93; that stretch reads EFSPTRTYRGHDKKDKKIQKK.

The protein belongs to the universal ribosomal protein uS19 family.

Its function is as follows. Protein S19 forms a complex with S13 that binds strongly to the 16S ribosomal RNA. The polypeptide is Small ribosomal subunit protein uS19 (Phytoplasma mali (strain AT)).